Reading from the N-terminus, the 325-residue chain is Heat-inducible transcription repressor HrcA (325 aa).

Belongs to the HrcA family.

Functionally, negative regulator of class I heat shock genes (grpE-dnaK-dnaJ and groELS operons). Prevents heat-shock induction of these operons. The chain is Heat-inducible transcription repressor HrcA from Staphylococcus aureus (strain MRSA252).